The chain runs to 320 residues: Ribosomal large subunit pseudouridine synthase C (320 aa).

An S4 RNA-binding domain is found at 20 to 83 (QRIDNFLLAK…AEREEVQVSA (64 aa)). Residue D144 is part of the active site.

It belongs to the pseudouridine synthase RluA family.

The enzyme catalyses uridine(955/2504/2580) in 23S rRNA = pseudouridine(955/2504/2580) in 23S rRNA. Responsible for synthesis of pseudouridine from uracil at positions 955, 2504 and 2580 in 23S ribosomal RNA. The polypeptide is Ribosomal large subunit pseudouridine synthase C (rluC) (Yersinia pestis).